Consider the following 371-residue polypeptide: Protein SOMBRERO (371 aa).

Positions 17-166 (VPPGFRFHPT…GWVVCRVFKK (150 aa)) constitute an NAC domain. Residues 118 to 172 (IGLRKTLVFYTGRAPHGQKTEWIMHEYRLDDSENEIQEDGWVVCRVFKKKNHFRG) mediate DNA binding. Disordered stretches follow at residues 176-213 (EQEQDHHHHHQYISTNNDHDHHHHIDSNSNNHSPLILH) and 316-355 (VQNHQAKCFGDLSNNDNNDQADHLGNNNGGSSSSPVNQRF). Over residues 192 to 201 (NDHDHHHHID) the composition is skewed to basic and acidic residues. Low complexity-rich tracts occupy residues 202 to 213 (SNSNNHSPLILH) and 340 to 349 (GNNNGGSSSS).

In terms of tissue distribution, accumulates in maturing root cap cells, in both COL and LRC cells.

It localises to the nucleus. Transcription regulator. Together with BRN1 and BRN2, regulates cellular maturation of root cap. Represses stem cell-like divisions in the root cap daughter cells, and thus promotes daughter cell fate. Inhibits expression of its positive regulator FEZ in a feedback loop for controlled switches in cell division plane. Promotes the expression of genes involved in secondary cell walls (SCW) biosynthesis. This is Protein SOMBRERO (SMB) from Arabidopsis thaliana (Mouse-ear cress).